A 758-amino-acid chain; its full sequence is Spastin (758 aa).

Positions 1–103 (MVRTKNQSSS…SPRSGHHHSY (103 aa)) are disordered. Over 1–121 (MVRTKNQSSS…KQNLYVVSFP (121 aa)) the chain is Cytoplasmic. An interaction with atl region spans residues 1–159 (MVRTKNQSSS…VIYRPHRRDC (159 aa)). The interval 1 to 210 (MVRTKNQSSS…RPIQPLEMAA (210 aa)) is required for localization to punctate cytoplasmic foci. Low complexity-rich tracts occupy residues 8-28 (SSSSSASSSSTKSPIKSSSGA), 43-58 (RSSSASNVAAVVAGGS), 66-76 (SSNRRSPGSSP), and 85-95 (TDDLTPTTCSP). An intramembrane region (helical) is located at residues 122-142 (IIFLFNVLRSLIYQLFCIFRY). At 143 to 758 (LYGASTKVIY…WSQDYGDITI (616 aa)) the chain is on the cytoplasmic side. Polar residues-rich tracts occupy residues 169–180 (SKEQQQSLNHPS) and 189–198 (QEQQLSNQPQ). The segment at 169-202 (SKEQQQSLNHPSELNREGDGQEQQLSNQPQRFRP) is disordered. Residues 208 to 758 (MAANRPGGGY…WSQDYGDITI (551 aa)) are sufficient for interaction with microtubules and microtubule severing. In terms of domain architecture, MIT spans 233 to 308 (HRRAFEYISK…SMARDRLHFL (76 aa)). The interval 353–454 (RVRSSGYGPK…GPSGSGASTP (102 aa)) is disordered. Polar residues-rich tracts occupy residues 390-406 (NKSQTLPRNLGSKTSVG) and 425-454 (QFSSGRNTPPQRSRTPINNNGPSGSGASTP). Phosphothreonine is present on Thr-439. The tract at residues 443–455 (NNGPSGSGASTPV) is required for interaction with microtubules. Position 523 to 530 (523 to 530 (GPPGNGKT)) interacts with ATP.

This sequence belongs to the AAA ATPase family. Spastin subfamily. Homohexamer. The homohexamer is stabilized by ATP-binding. The homohexamer may adopt a ring conformation through which microtubules pass prior to being severed. Interacts with microtubules. Interacts with atl; may be involved in microtubule dynamics.

The protein resides in the membrane. Its subcellular location is the cytoplasm. It localises to the cytoskeleton. The protein localises to the microtubule organizing center. It is found in the centrosome. The protein resides in the chromosome. Its subcellular location is the lipid droplet. It catalyses the reaction n ATP + n H2O + a microtubule = n ADP + n phosphate + (n+1) alpha/beta tubulin heterodimers.. Functionally, ATP-dependent microtubule severing protein. Stimulates microtubule minus-end depolymerization and poleward microtubule flux in the mitotic spindle. Regulates microtubule stability in the neuromuscular junction synapse. Involved in lipid metabolism by regulating the size and distribution of lipid droplets. Involved in axon regeneration by regulating microtubule severing. In Drosophila melanogaster (Fruit fly), this protein is Spastin.